Here is a 43-residue protein sequence, read N- to C-terminus: MSGIVEAISNAVKSGLDHDWVNMGTSIADVVAKGADFIAGFFS.

Position 1 is an N-formylmethionine (Met1).

This sequence belongs to the staphylococcal hemolytic protein family.

It is found in the secreted. Functionally, virulence factor. Causes hemolysis of erythrocytes. Acts synergistically with beta-hemolysins from S.aureus ATCC 25923. Cytotoxic towards human dermal fibroblasts. In Staphylococcus ureilyticus (Staphylococcus cohnii subsp. urealyticus), this protein is Hemolysin H1U.